The following is a 379-amino-acid chain: MKTLLFLSCIVVAAYCACNDNLESVLDKYRNREIDSEAAELDGDDLIDYVNENQNLWTAKKQRRFSSVYGENDKAKWGLMGVNHVRLSVKGKQHLSKTKDLDLDIPESFDSRDNWPKCDSIKVIRDQSSCGSCWAFGAVEAMSDRICIASHGELQVTLSADDLLSCCKSCGFGCNGGDPLAAWRYWVKDGIVTGSNYTANNGCKPYPFPPCEHHSKKTHFDPCPHDLYPTPKCEKKCVSDYTDKTYSEDKFFGASAYGVKDDVEAIQKELMTHGPLEIAFEVYEDFLNYDGGVYVHTGGKLGGGHAVKLIGWGIDDGIPYWTVANSWNTDWGEDGFFRILRGVDECGIESGVVGGIPKLNSLTSRLHRHHRRHVYDDNY.

The first 16 residues, 1–16 (MKTLLFLSCIVVAAYC), serve as a signal peptide directing secretion. A propeptide spanning residues 17-104 (ACNDNLESVL…LSKTKDLDLD (88 aa)) is cleaved from the precursor. 6 disulfide bridges follow: C118/C147, C130/C174, C166/C233, C167/C170, C203/C237, and C211/C223. Residue C133 is part of the active site. N-linked (GlcNAc...) asparagine glycosylation is present at N196. A glycan (N-linked (GlcNAc...) asparagine; atypical) is linked at N201. Active-site residues include H305 and N325.

This sequence belongs to the peptidase C1 family.

This chain is Cathepsin B-like cysteine proteinase 6 (cpr-6), found in Caenorhabditis elegans.